We begin with the raw amino-acid sequence, 296 residues long: NAD kinase (296 aa).

Aspartate 72 (proton acceptor) is an active-site residue. NAD(+)-binding positions include 72 to 73 (DG), 146 to 147 (ND), arginine 157, lysine 174, aspartate 176, 187 to 192 (TAYALS), and glutamine 247.

This sequence belongs to the NAD kinase family. A divalent metal cation is required as a cofactor.

The protein localises to the cytoplasm. It carries out the reaction NAD(+) + ATP = ADP + NADP(+) + H(+). Involved in the regulation of the intracellular balance of NAD and NADP, and is a key enzyme in the biosynthesis of NADP. Catalyzes specifically the phosphorylation on 2'-hydroxyl of the adenosine moiety of NAD to yield NADP. This chain is NAD kinase, found in Pseudomonas putida (strain GB-1).